The following is a 756-amino-acid chain: ATP-dependent DNA helicase Hel308 (756 aa).

Residues Gln29 and 47–54 (SATASGKT) contribute to the ATP site. Residues 34–201 (RAGLLNGENI…WLNAKLVKSD (168 aa)) form the Helicase ATP-binding domain. A DEAH box motif is present at residues 146 to 149 (DEIH). The region spanning 233–435 (SLINLTVDTL…PTSLKFHTLS (203 aa)) is the Helicase C-terminal domain.

Belongs to the helicase family. Hel308 subfamily. In terms of assembly, monomer.

It carries out the reaction Couples ATP hydrolysis with the unwinding of duplex DNA by translocating in the 3'-5' direction.. It catalyses the reaction ATP + H2O = ADP + phosphate + H(+). In terms of biological role, DNA-dependent ATPase and 3'-5' DNA helicase that may be involved in repair of stalled replication forks. In Caldivirga maquilingensis (strain ATCC 700844 / DSM 13496 / JCM 10307 / IC-167), this protein is ATP-dependent DNA helicase Hel308.